We begin with the raw amino-acid sequence, 80 residues long: Bacteriochlorophyll c-binding protein (80 aa).

Position 25 (His-25) interacts with a bacteriochlorophyll c. Residues Pro-49–Arg-80 are disordered. The propeptide occupies Ser-54 to Arg-80. The span at Arg-70–Arg-80 shows a compositional bias: basic residues.

This sequence belongs to the BChl C/E-binding protein family.

The protein resides in the chlorosome. The protein localises to the chlorosome envelope. Functionally, component of the photosynthetic apparatus. The light harvesting B740 complex binds bacteriochlorophyll c. This chain is Bacteriochlorophyll c-binding protein (cmsA), found in Chloroflexus aurantiacus (strain ATCC 29366 / DSM 635 / J-10-fl).